The primary structure comprises 593 residues: Aspartate--tRNA(Asp/Asn) ligase (593 aa).

Residue E175 participates in L-aspartate binding. An aspartate region spans residues 199–202 (QQYK). R221 and H452 together coordinate L-aspartate. Position 221–223 (221–223 (RDE)) interacts with ATP. E486 is an ATP binding site. Residue R493 participates in L-aspartate binding. 538 to 541 (GVDR) lines the ATP pocket.

This sequence belongs to the class-II aminoacyl-tRNA synthetase family. Type 1 subfamily. In terms of assembly, homodimer.

The protein localises to the cytoplasm. The catalysed reaction is tRNA(Asx) + L-aspartate + ATP = L-aspartyl-tRNA(Asx) + AMP + diphosphate. Its function is as follows. Aspartyl-tRNA synthetase with relaxed tRNA specificity since it is able to aspartylate not only its cognate tRNA(Asp) but also tRNA(Asn). Reaction proceeds in two steps: L-aspartate is first activated by ATP to form Asp-AMP and then transferred to the acceptor end of tRNA(Asp/Asn). This chain is Aspartate--tRNA(Asp/Asn) ligase, found in Novosphingobium aromaticivorans (strain ATCC 700278 / DSM 12444 / CCUG 56034 / CIP 105152 / NBRC 16084 / F199).